The sequence spans 476 residues: Cysteine--tRNA ligase (476 aa).

Residue Cys29 coordinates Zn(2+). Residues 31–41 (PTVYDYPHLGH) carry the 'HIGH' region motif. 3 residues coordinate Zn(2+): Cys209, His234, and Glu238. The 'KMSKS' region signature appears at 266 to 270 (KMSKS). Residue Lys269 participates in ATP binding.

Belongs to the class-I aminoacyl-tRNA synthetase family. Zn(2+) is required as a cofactor.

It is found in the cytoplasm. The enzyme catalyses tRNA(Cys) + L-cysteine + ATP = L-cysteinyl-tRNA(Cys) + AMP + diphosphate. The protein is Cysteine--tRNA ligase of Thermococcus gammatolerans (strain DSM 15229 / JCM 11827 / EJ3).